The following is a 367-amino-acid chain: Alanine racemase (367 aa).

Lys35 acts as the Proton acceptor; specific for D-alanine in catalysis. At Lys35 the chain carries N6-(pyridoxal phosphate)lysine. Arg130 lines the substrate pocket. Tyr256 acts as the Proton acceptor; specific for L-alanine in catalysis. Substrate is bound at residue Met304.

This sequence belongs to the alanine racemase family. The cofactor is pyridoxal 5'-phosphate.

The enzyme catalyses L-alanine = D-alanine. The protein operates within amino-acid biosynthesis; D-alanine biosynthesis; D-alanine from L-alanine: step 1/1. Catalyzes the interconversion of L-alanine and D-alanine. May also act on other amino acids. The chain is Alanine racemase (alr) from Methylibium petroleiphilum (strain ATCC BAA-1232 / LMG 22953 / PM1).